The following is a 173-amino-acid chain: MTYIVSLFLLGLVLGLVAVASNPAPYFAALGLVVAAGVGCGVLVGYGGSFLSLVLFLIYLGGMLVVFAYSAALAAEPFPESWGDRSVLGYVVVYTVGVMLVAGWFWSGWYETSWVVVDEFKEFSVLRGDTSGVALMYSYGGGMLIVCAWVLLLTLFVVLELTRGLSRGALRAV.

The next 5 membrane-spanning stretches (helical) occupy residues 1 to 21 (MTYIVSLFLLGLVLGLVAVAS), 27 to 47 (FAALGLVVAAGVGCGVLVGYG), 53 to 73 (LVLFLIYLGGMLVVFAYSAAL), 86 to 106 (SVLGYVVVYTVGVMLVAGWFW), and 139 to 159 (YGGGMLIVCAWVLLLTLFVVL).

The protein belongs to the complex I subunit 6 family.

It localises to the mitochondrion membrane. The catalysed reaction is a ubiquinone + NADH + 5 H(+)(in) = a ubiquinol + NAD(+) + 4 H(+)(out). Functionally, core subunit of the mitochondrial membrane respiratory chain NADH dehydrogenase (Complex I) that is believed to belong to the minimal assembly required for catalysis. Complex I functions in the transfer of electrons from NADH to the respiratory chain. The immediate electron acceptor for the enzyme is believed to be ubiquinone. The protein is NADH-ubiquinone oxidoreductase chain 6 (MT-ND6) of Salmo salar (Atlantic salmon).